Reading from the N-terminus, the 469-residue chain is Serine hydroxymethyltransferase, cytosolic (469 aa).

N6-(pyridoxal phosphate)lysine is present on Lys248.

Belongs to the SHMT family. Homotetramer. Requires pyridoxal 5'-phosphate as cofactor.

It is found in the cytoplasm. The enzyme catalyses (6R)-5,10-methylene-5,6,7,8-tetrahydrofolate + glycine + H2O = (6S)-5,6,7,8-tetrahydrofolate + L-serine. The protein operates within one-carbon metabolism; tetrahydrofolate interconversion. Interconversion of serine and glycine. In Candida glabrata (strain ATCC 2001 / BCRC 20586 / JCM 3761 / NBRC 0622 / NRRL Y-65 / CBS 138) (Yeast), this protein is Serine hydroxymethyltransferase, cytosolic (SHM2).